We begin with the raw amino-acid sequence, 170 residues long: MANKLFLVCATFALCFLLTNASIYRTVVEFDEDDASNPMGPRQKCQKEFQQSQHLRACQKLMRMQMRQGRGGGPSLDDEFDLEDDIENPQGPQQGHQILQQCCSELRQEEPVCVCPTLRQAARAVSLQGQHGPFQSRKIYKTAKYLPNICKIQQVGECPFQTTIPFFPPY.

The N-terminal stretch at 1–21 (MANKLFLVCATFALCFLLTNA) is a signal peptide. Propeptides lie at residues 22–37 (SIYR…DASN) and 73–88 (GPSL…DIEN).

It belongs to the 2S seed storage albumins family. The mature protein consists of a small and a large chain linked by disulfide bonds.

This is a 2S seed storage protein. The chain is 2S seed storage protein 2 (AT2S2) from Arabidopsis thaliana (Mouse-ear cress).